A 356-amino-acid chain; its full sequence is MLIKINSNDIWLPIHFYDETFNFQLVLSIVELFSYLICAYILTLNIYIILKIKMFHRNLYILAIPLFGIWFELIIGKLITIAYRLKILNPGFELGVHIEIWTSDPTRKLKVESVNGLELLIFGGFLQWHYMFTIIFGVLAIAVERVVASVLIENYESNTQLFIPLFLTVISQFLSISTSLALLFQKVGPFLAQLPWIICCPFSAMAYFFVKKCNESFEREIRNPRRRRHFSVSQQFQVKENLRALYLGTRLVFVVLSCIALCGIGITALFYDLIPPFCCHFVENFLFLHPYLSCLTAIFSVPQWKNEFREVSVLGRCLKIGRLKIESENAMEIQDSTKKMGTETDLYFQQLADSWI.

The next 7 membrane-spanning stretches (helical) occupy residues 29-49 (IVEL…IYII), 61-81 (ILAI…LITI), 119-139 (LLIF…FGVL), 161-181 (LFIP…TSLA), 190-210 (FLAQ…YFFV), 251-271 (LVFV…ALFY), and 281-301 (FVEN…IFSV).

This sequence belongs to the nematode receptor-like protein sre family.

The protein resides in the membrane. The chain is Serpentine receptor class epsilon-29 (sre-29) from Caenorhabditis elegans.